The primary structure comprises 535 residues: MKLWVSALLMAWFGVLSCVQAEFFTSIGHMTDLIYAEKELVQSLKEYILVEEAKLSKIKSWANKMEALTSKSAADAEGYLAHPVNAYKLVKRLNTDWPALEDLVLQDSAAGFIANLSVQRQFFPTDEDEIGAAKALMRLQDTYRLDPGTISRGELPGTKYQAMLSVDDCFGMGRSAYNEGDYYHTVLWMEQVLKQLDAGEEATTTKSQVLDYLSYAVFQLGDLHRALELTRRLLSLDPSHERAGGNLRYFEQLLEEEREKTLTNQTEAELATPEGIYERPVDYLPERDVYESLCRGEGVKLTPRRQKRLFCRYHHGNRAPQLLIAPFKEEDEWDSPHIVRYYDVMSDEEIERIKEIAKPKLARATVRDPKTGVLTVASYRVSKSSWLEEDDDPVVARVNRRMQHITGLTVKTAELLQVANYGVGGQYEPHFDFSRNDERDTFKHLGTGNRVATFLNYMSDVEAGGATVFPDLGAAIWPKKGTAVFWYNLLRSGEGDYRTRHAACPVLVGCKWVSNKWFHERGQEFLRPCGSTEVD.

An N-terminal signal peptide occupies residues M1 to A21. The N-linked (GlcNAc...) asparagine glycan is linked to N115. The stretch at S207–H240 is one TPR repeat. N264 carries N-linked (GlcNAc...) asparagine glycosylation. The 109-residue stretch at T412–E520 folds into the Fe2OG dioxygenase domain. Fe cation-binding residues include H430 and D432. An N6-succinyllysine modification is found at K480. H501 contributes to the Fe cation binding site. Residue K511 coordinates 2-oxoglutarate.

The protein belongs to the P4HA family. As to quaternary structure, heterotetramer of two alpha-2 chains and two beta chains (P4HB) (the beta chain is the multi-functional PDI), where P4HB plays the role of a structural subunit; this tetramer catalyzes the formation of 4-hydroxyproline in collagen. The cofactor is Fe(2+). Requires L-ascorbate as cofactor. Expressed in the heart, placenta, lung and pancreas.

Its subcellular location is the endoplasmic reticulum lumen. The enzyme catalyses L-prolyl-[collagen] + 2-oxoglutarate + O2 = trans-4-hydroxy-L-prolyl-[collagen] + succinate + CO2. Its activity is regulated as follows. Inhibited by poly(L-proline) only at very high concentrations. In terms of biological role, catalyzes the post-translational formation of 4-hydroxyproline in -Xaa-Pro-Gly- sequences in collagens and other proteins. The polypeptide is Prolyl 4-hydroxylase subunit alpha-2 (P4HA2) (Homo sapiens (Human)).